The sequence spans 247 residues: Carboxy-S-adenosyl-L-methionine synthase (247 aa).

S-adenosyl-L-methionine-binding positions include Y39, G64–S66, D89–N90, D117–I118, N132, and R199.

The protein belongs to the class I-like SAM-binding methyltransferase superfamily. Cx-SAM synthase family. As to quaternary structure, homodimer.

It carries out the reaction prephenate + S-adenosyl-L-methionine = carboxy-S-adenosyl-L-methionine + 3-phenylpyruvate + H2O. Catalyzes the conversion of S-adenosyl-L-methionine (SAM) to carboxy-S-adenosyl-L-methionine (Cx-SAM). This Escherichia fergusonii (strain ATCC 35469 / DSM 13698 / CCUG 18766 / IAM 14443 / JCM 21226 / LMG 7866 / NBRC 102419 / NCTC 12128 / CDC 0568-73) protein is Carboxy-S-adenosyl-L-methionine synthase.